The sequence spans 636 residues: MMEDEDFLLALRLQEQFDQETPAAGWPDEDCPSSKRRRVDPSGGLDVIPFTQPRAERPLSIVDESWETLDPNPDVRAMFLQFNDKFFWGKLSGVEVKWSPRMTLCAGVCSYEGRGGLCSIRLSEPLLKLRPRKDLVQTLLHEMIHALLFVTQNNRDRDGHGPEFCKHMNRINQASGTNITIYHSFHDEVDVYRQHWWRCNGPCQNRRPFFGYVKRAMNRPPSARDPWWADHQRSCGGTYTKIKEPENYGKTGKSDKQRDKMPATEMPKKSKPPSSTSSSGSQDIRNIIPFSGRGFVLGGNAQIPTNKQIQSPPKAPPEPLHSPPDSPLLPRLQLNEDNLKRLSSGTSNIPRKRSVGNTNAFINVNGSPVRISNGNGSGGKQRSVRDLFQAIVLKSPDRGASAVGSSKSSTDASTADYRSNSALDAKPSGKTSLITDHLSYTISGPKTLSAESNISKYFGGSAKTDVQDSKLKTFGSPQKSAIGTPGYVSKAFGSNQRPDSTSSGIRNTGSPQRSHASATSGSSFKHFRGPAKPESNFPSPRNIGSPRTSGTTPSGAKKRSWEEHNSERVFDYFQRTVGESATSTDKKREEVRSEAPPPVRDQQANNPPAQITVHCPVCHIRLPESTINDHLDSCLL.

Residues 19-42 form a disordered region; that stretch reads QETPAAGWPDEDCPSSKRRRVDPS. Residues 76–183 enclose the SprT-like domain; sequence RAMFLQFNDK…ASGTNITIYH (108 aa). Residue His141 participates in Zn(2+) binding. Residue Glu142 is part of the active site. Positions 145 and 160 each coordinate Zn(2+). Disordered stretches follow at residues 238-382 and 398-430; these read TYTK…GKQR and RGASAVGSSKSSTDASTADYRSNSALDAKPSGK. The span at 241–268 shows a compositional bias: basic and acidic residues; sequence KIKEPENYGKTGKSDKQRDKMPATEMPK. Residues 272–281 are compositionally biased toward low complexity; that stretch reads PPSSTSSSGS. The SHP-box signature appears at 290–298; sequence FSGRGFVLG. The span at 302–311 shows a compositional bias: polar residues; that stretch reads QIPTNKQIQS. A compositionally biased stretch (pro residues) spans 313 to 327; it reads PKAPPEPLHSPPDSP. Residues 341-374 show a composition bias toward polar residues; it reads RLSSGTSNIPRKRSVGNTNAFINVNGSPVRISNG. Over residues 399–416 the composition is skewed to low complexity; the sequence is GASAVGSSKSSTDASTAD. The PIP-box motif lies at 451 to 458; that stretch reads ESNISKYF. The tract at residues 473–608 is disordered; the sequence is TFGSPQKSAI…VRDQQANNPP (136 aa). Polar residues-rich tracts occupy residues 492–523 and 545–554; these read FGSNQRPDSTSSGIRNTGSPQRSHASATSGSS and SPRTSGTTPS. Residues 535 to 566 carry the Nuclear localization signal motif; it reads SNFPSPRNIGSPRTSGTTPSGAKKRSWEEHNS. Composition is skewed to basic and acidic residues over residues 559–570 and 584–593; these read RSWEEHNSERVF and TDKKREEVRS. Residues 612 to 636 form a UBZ4-type zinc finger; sequence TVHCPVCHIRLPESTINDHLDSCLL. Residues Cys615, Cys618, His630, and Cys634 each coordinate Zn(2+).

This sequence belongs to the Spartan family. Homodimer. The cofactor is Zn(2+). In terms of processing, autocatalytically cleaved in response to double-stranded DNA-binding: autocatalytic cleavage takes place in trans and leads to inactivation.

Its subcellular location is the nucleus. It localises to the chromosome. Its activity is regulated as follows. DNA-binding activates the protease activity: single-stranded DNA-binding specifically activates ability to cleave covalent DNA-protein cross-links (DPCs). In contrast, double-stranded DNA-binding specifically activates autocatalytic cleavage, and subsequent inactivation. Its function is as follows. DNA-dependent metalloendopeptidase that mediates the proteolytic cleavage of covalent DNA-protein cross-links (DPCs) during DNA synthesis, thereby playing a key role in maintaining genomic integrity. DPCs are highly toxic DNA lesions that interfere with essential chromatin transactions, such as replication and transcription, and which are induced by reactive agents, such as UV light or formaldehyde. Associates with the DNA replication machinery and specifically removes DPCs during DNA synthesis. Catalyzes proteolytic cleavage of the hmces DNA-protein cross-link following unfolding by the brip1/fancj helicase. Acts as a pleiotropic protease for DNA-binding proteins cross-linked with DNA, such as top1, top2a, histones H3 and H4. Mediates degradation of DPCs that are not ubiquitinated, while it is not able to degrade ubiquitinated DPCs. SPRTN activation requires polymerase collision with DPCs followed by helicase bypass of DPCs. May also act as a 'reader' of ubiquitinated pcna: facilitates chromatin association of rad18 and is required for efficient pcna monoubiquitination, promoting a feed-forward loop to enhance pcna ubiquitination and translesion DNA synthesis. Acts as a regulator of translesion DNA synthesis by recruiting vcp/p97 to sites of DNA damage. The protein is DNA-dependent metalloprotease SPRTN of Danio rerio (Zebrafish).